The following is a 246-amino-acid chain: Aspartate/glutamate leucyltransferase (246 aa).

It belongs to the R-transferase family. Bpt subfamily.

It localises to the cytoplasm. It carries out the reaction N-terminal L-glutamyl-[protein] + L-leucyl-tRNA(Leu) = N-terminal L-leucyl-L-glutamyl-[protein] + tRNA(Leu) + H(+). The catalysed reaction is N-terminal L-aspartyl-[protein] + L-leucyl-tRNA(Leu) = N-terminal L-leucyl-L-aspartyl-[protein] + tRNA(Leu) + H(+). Its function is as follows. Functions in the N-end rule pathway of protein degradation where it conjugates Leu from its aminoacyl-tRNA to the N-termini of proteins containing an N-terminal aspartate or glutamate. This chain is Aspartate/glutamate leucyltransferase, found in Rhodospirillum rubrum (strain ATCC 11170 / ATH 1.1.1 / DSM 467 / LMG 4362 / NCIMB 8255 / S1).